A 304-amino-acid polypeptide reads, in one-letter code: Acetyl-coenzyme A carboxylase carboxyl transferase subunit beta (304 aa).

Residues leucine 29–proline 298 form the CoA carboxyltransferase N-terminal domain. Zn(2+) contacts are provided by cysteine 33, cysteine 36, cysteine 52, and cysteine 55. The segment at cysteine 33 to cysteine 55 adopts a C4-type zinc-finger fold.

Belongs to the AccD/PCCB family. In terms of assembly, acetyl-CoA carboxylase is a heterohexamer composed of biotin carboxyl carrier protein (AccB), biotin carboxylase (AccC) and two subunits each of ACCase subunit alpha (AccA) and ACCase subunit beta (AccD). Requires Zn(2+) as cofactor.

The protein localises to the cytoplasm. It carries out the reaction N(6)-carboxybiotinyl-L-lysyl-[protein] + acetyl-CoA = N(6)-biotinyl-L-lysyl-[protein] + malonyl-CoA. The protein operates within lipid metabolism; malonyl-CoA biosynthesis; malonyl-CoA from acetyl-CoA: step 1/1. Component of the acetyl coenzyme A carboxylase (ACC) complex. Biotin carboxylase (BC) catalyzes the carboxylation of biotin on its carrier protein (BCCP) and then the CO(2) group is transferred by the transcarboxylase to acetyl-CoA to form malonyl-CoA. This is Acetyl-coenzyme A carboxylase carboxyl transferase subunit beta from Acaryochloris marina (strain MBIC 11017).